A 271-amino-acid chain; its full sequence is ATP synthase subunit a (271 aa).

A run of 5 helical transmembrane segments spans residues 38–58 (FWTLNIDSMFFSVVLGLLFLL), 100–120 (LIAPLALTIFVWVFLMNLMDL), 146–166 (DVNITLSMALGVFILILFYSI), 220–240 (LIFILIAGLLPWWSQWILNVP), and 242–262 (AIFHILIITLQAFIFMGLTIV).

This sequence belongs to the ATPase A chain family. F-type ATPases have 2 components, CF(1) - the catalytic core - and CF(0) - the membrane proton channel. CF(1) has five subunits: alpha(3), beta(3), gamma(1), delta(1), epsilon(1). CF(0) has three main subunits: a(1), b(2) and c(9-12). The alpha and beta chains form an alternating ring which encloses part of the gamma chain. CF(1) is attached to CF(0) by a central stalk formed by the gamma and epsilon chains, while a peripheral stalk is formed by the delta and b chains.

The protein resides in the cell inner membrane. Functionally, key component of the proton channel; it plays a direct role in the translocation of protons across the membrane. The protein is ATP synthase subunit a of Citrobacter koseri (strain ATCC BAA-895 / CDC 4225-83 / SGSC4696).